Reading from the N-terminus, the 381-residue chain is Transaldolase 2 (381 aa).

Catalysis depends on lysine 141, which acts as the Schiff-base intermediate with substrate.

This sequence belongs to the transaldolase family. Type 2 subfamily.

Its subcellular location is the cytoplasm. The enzyme catalyses D-sedoheptulose 7-phosphate + D-glyceraldehyde 3-phosphate = D-erythrose 4-phosphate + beta-D-fructose 6-phosphate. The protein operates within carbohydrate degradation; pentose phosphate pathway; D-glyceraldehyde 3-phosphate and beta-D-fructose 6-phosphate from D-ribose 5-phosphate and D-xylulose 5-phosphate (non-oxidative stage): step 2/3. Its function is as follows. Transaldolase is important for the balance of metabolites in the pentose-phosphate pathway. In Nostoc sp. (strain PCC 7120 / SAG 25.82 / UTEX 2576), this protein is Transaldolase 2 (tal2).